A 144-amino-acid polypeptide reads, in one-letter code: Putative acetyltransferase SAOUHSC_00995 (144 aa).

Residues 1 to 141 form the N-acetyltransferase domain; it reads MFSKVNNQKM…EHIEMTKKLT (141 aa). Residues 71–73, G79, and 112–114 each bind CoA; these read VAV and PFY.

Belongs to the UPF0039 (ElaA) family.

Its function is as follows. Could catalyze the transfer of an acetyl group from acetyl coenzyme A (AcCoA) to an acceptor substrate and release both CoA and the acetylated product. The polypeptide is Putative acetyltransferase SAOUHSC_00995 (Staphylococcus aureus (strain NCTC 8325 / PS 47)).